Here is a 278-residue protein sequence, read N- to C-terminus: Keratin-associated protein 5-1 (278 aa).

A run of 8 repeats spans residues 42–45 (CCVP), 48–51 (CCKP), 130–133 (CCVP), 136–139 (CCKP), 142–145 (CCVP), 239–242 (CCKP), 258–261 (CCKP), and 268–271 (CCVP). Positions 42-271 (CCVPVCCCKP…CCSQSSCCVP (230 aa)) are 8 X 4 AA repeats of C-C-X-P.

The protein belongs to the KRTAP type 5 family. In terms of assembly, interacts with hair keratins. In terms of tissue distribution, expressed in hair root but not in skin. Expressed also in lung, pancreas, ovary, testis.

In terms of biological role, in the hair cortex, hair keratin intermediate filaments are embedded in an interfilamentous matrix, consisting of hair keratin-associated protein (KRTAP), which are essential for the formation of a rigid and resistant hair shaft through their extensive disulfide bond cross-linking with abundant cysteine residues of hair keratins. The matrix proteins include the high-sulfur and high-glycine-tyrosine keratins. This is Keratin-associated protein 5-1 (KRTAP5-1) from Homo sapiens (Human).